Here is a 566-residue protein sequence, read N- to C-terminus: Arginine--tRNA ligase (566 aa).

Positions 129–139 (ANPTGPLHIGH) match the 'HIGH' region motif.

This sequence belongs to the class-I aminoacyl-tRNA synthetase family. Monomer.

The protein localises to the cytoplasm. It catalyses the reaction tRNA(Arg) + L-arginine + ATP = L-arginyl-tRNA(Arg) + AMP + diphosphate. The polypeptide is Arginine--tRNA ligase (Wolbachia pipientis subsp. Culex pipiens (strain wPip)).